A 310-amino-acid polypeptide reads, in one-letter code: Cytosolic Fe-S cluster assembly factor Nubp1 homolog (310 aa).

Residues C9, C23, C26, and C32 each coordinate [4Fe-4S] cluster. Residue 63–70 participates in ATP binding; it reads GKGGVGKS. Residues C240 and C243 each contribute to the [4Fe-4S] cluster site.

The protein belongs to the Mrp/NBP35 ATP-binding proteins family. NUBP1/NBP35 subfamily. As to quaternary structure, heterotetramer of 2 Nubp1 and 2 Nubp2 chains. It depends on [4Fe-4S] cluster as a cofactor.

The protein localises to the cytoplasm. Its function is as follows. Component of the cytosolic iron-sulfur (Fe/S) protein assembly (CIA) machinery. Required for maturation of extramitochondrial Fe-S proteins. The Nubp1-Nubp2 heterotetramer forms a Fe-S scaffold complex, mediating the de novo assembly of an Fe-S cluster and its transfer to target apoproteins. The polypeptide is Cytosolic Fe-S cluster assembly factor Nubp1 homolog (Drosophila virilis (Fruit fly)).